A 392-amino-acid polypeptide reads, in one-letter code: S-adenosylmethionine synthase (392 aa).

Residue glutamate 10 coordinates Mg(2+). Histidine 16 serves as a coordination point for ATP. Residue glutamate 44 coordinates K(+). L-methionine is bound by residues glutamate 57 and glutamine 100. Residues 168-170 (DGK), 236-239 (SGRF), aspartate 247, 253-254 (RK), alanine 270, lysine 274, and lysine 278 contribute to the ATP site. Aspartate 247 is an L-methionine binding site. Lysine 278 provides a ligand contact to L-methionine.

Belongs to the AdoMet synthase family. Homotetramer. The cofactor is Mn(2+). Requires Mg(2+) as cofactor. Co(2+) is required as a cofactor. It depends on K(+) as a cofactor.

The protein localises to the cytoplasm. It catalyses the reaction L-methionine + ATP + H2O = S-adenosyl-L-methionine + phosphate + diphosphate. The protein operates within amino-acid biosynthesis; S-adenosyl-L-methionine biosynthesis; S-adenosyl-L-methionine from L-methionine: step 1/1. Catalyzes the formation of S-adenosylmethionine from methionine and ATP. The reaction comprises two steps that are both catalyzed by the same enzyme: formation of S-adenosylmethionine (AdoMet) and triphosphate, and subsequent hydrolysis of the triphosphate. The sequence is that of S-adenosylmethionine synthase (SAMS) from Phaseolus lunatus (Lima bean).